Consider the following 1362-residue polypeptide: DNA-directed RNA polymerase subunit beta'' (1362 aa).

Residues cysteine 224, cysteine 295, cysteine 302, and cysteine 305 each contribute to the Zn(2+) site.

This sequence belongs to the RNA polymerase beta' chain family. RpoC2 subfamily. In terms of assembly, in plastids the minimal PEP RNA polymerase catalytic core is composed of four subunits: alpha, beta, beta', and beta''. When a (nuclear-encoded) sigma factor is associated with the core the holoenzyme is formed, which can initiate transcription. Zn(2+) serves as cofactor.

The protein resides in the plastid. Its subcellular location is the chloroplast. It catalyses the reaction RNA(n) + a ribonucleoside 5'-triphosphate = RNA(n+1) + diphosphate. DNA-dependent RNA polymerase catalyzes the transcription of DNA into RNA using the four ribonucleoside triphosphates as substrates. This Helianthus annuus (Common sunflower) protein is DNA-directed RNA polymerase subunit beta''.